We begin with the raw amino-acid sequence, 411 residues long: Bifunctional protein GlmU (411 aa).

The tract at residues 1–204 (MDAIILCAGK…NGKLHGVELK (204 aa)) is pyrophosphorylase. Residues 6 to 9 (LCAG), Gln-74, and Gly-79 each bind UTP. Residues Thr-80, Gly-130, Asn-142, and Asn-158 each contribute to the N-acetyl-alpha-D-glucosamine 1-phosphate site. The tract at residues 205-224 (GYWNDIGHPWDVLSANNHFL) is linker. The segment at 225–411 (NKIISKVSGK…DELVITKKRN (187 aa)) is N-acetyltransferase. His-308 (proton acceptor) is an active-site residue. Residues Ala-384 and Lys-401 each coordinate acetyl-CoA.

The protein in the N-terminal section; belongs to the N-acetylglucosamine-1-phosphate uridyltransferase family. It in the C-terminal section; belongs to the transferase hexapeptide repeat family.

It carries out the reaction N-acetyl-alpha-D-glucosamine 1-phosphate + UTP + H(+) = UDP-N-acetyl-alpha-D-glucosamine + diphosphate. It catalyses the reaction alpha-D-glucosamine 1-phosphate + acetyl-CoA = N-acetyl-alpha-D-glucosamine 1-phosphate + CoA + H(+). It participates in nucleotide-sugar biosynthesis; UDP-N-acetyl-alpha-D-glucosamine biosynthesis; N-acetyl-alpha-D-glucosamine 1-phosphate from alpha-D-glucosamine 6-phosphate (route II): step 2/2. Its pathway is nucleotide-sugar biosynthesis; UDP-N-acetyl-alpha-D-glucosamine biosynthesis; UDP-N-acetyl-alpha-D-glucosamine from N-acetyl-alpha-D-glucosamine 1-phosphate: step 1/1. Functionally, catalyzes the last two sequential reactions in the de novo biosynthetic pathway for UDP-N-acetyl-glucosamine (UDP-GlcNAc). Responsible for the acetylation of GlcN-1-P to GlcNAc-1-P, and for the uridyl transfer from UTP to GlcNAc-1-P, to produce UDP-GlcNAc and pyrophosphate. This is Bifunctional protein GlmU from Methanococcus maripaludis (strain DSM 14266 / JCM 13030 / NBRC 101832 / S2 / LL).